We begin with the raw amino-acid sequence, 354 residues long: Methylthioribose-1-phosphate isomerase (354 aa).

Substrate contacts are provided by residues 54-56, R97, and Q204; that span reads RGA. D245 acts as the Proton donor in catalysis. Residue 255 to 256 participates in substrate binding; that stretch reads NK.

This sequence belongs to the eIF-2B alpha/beta/delta subunits family. MtnA subfamily.

The enzyme catalyses 5-(methylsulfanyl)-alpha-D-ribose 1-phosphate = 5-(methylsulfanyl)-D-ribulose 1-phosphate. Its pathway is amino-acid biosynthesis; L-methionine biosynthesis via salvage pathway; L-methionine from S-methyl-5-thio-alpha-D-ribose 1-phosphate: step 1/6. Catalyzes the interconversion of methylthioribose-1-phosphate (MTR-1-P) into methylthioribulose-1-phosphate (MTRu-1-P). In Albidiferax ferrireducens (strain ATCC BAA-621 / DSM 15236 / T118) (Rhodoferax ferrireducens), this protein is Methylthioribose-1-phosphate isomerase.